The following is a 316-amino-acid chain: MSDGNTAAAWVPTGSVTVRVPGKVNLYLAVGDRREDGYHELTTIFQAVSLLDEVTVRNADVLSLDIVGEGADKLPTDERNLAWQAAELMADHVGRAPDVSIMIDKSIPVAGGMAGGSADAAAVLVAMNSLWELNVPRRDLRMLAARLGSDVPFALHGGTALGTGRGEELATVLSRNTFHWVLAFADGELLTRKVFAELDRLRRAGDPPRLPGPGPVLAALAAGDADQLAPLLGNEMQAAAVSLNPGLRRTLRAGVQAGALAGIVSGSGPTCAFLCPSAAAAVDVGTEVSGVGVCRTVRVASGPVAGARVVPAPTEV.

Lysine 23 is a catalytic residue. 108–118 (PVAGGMAGGSA) serves as a coordination point for ATP. Aspartate 150 is an active-site residue.

This sequence belongs to the GHMP kinase family. IspE subfamily.

The catalysed reaction is 4-CDP-2-C-methyl-D-erythritol + ATP = 4-CDP-2-C-methyl-D-erythritol 2-phosphate + ADP + H(+). Its pathway is isoprenoid biosynthesis; isopentenyl diphosphate biosynthesis via DXP pathway; isopentenyl diphosphate from 1-deoxy-D-xylulose 5-phosphate: step 3/6. Its function is as follows. Catalyzes the phosphorylation of the position 2 hydroxy group of 4-diphosphocytidyl-2C-methyl-D-erythritol. The polypeptide is 4-diphosphocytidyl-2-C-methyl-D-erythritol kinase (Mycolicibacterium paratuberculosis (strain ATCC BAA-968 / K-10) (Mycobacterium paratuberculosis)).